A 186-amino-acid chain; its full sequence is MTQQSPAFISPIWLKREQLIDVPEPIMLDWLFNQDSLTRRLDRLSDGGFSVFPQFEGWQALRRDECLALGLPLASEGWVREVYLCGNDSNWVFARSVAARSALQDGGLNMDELGTRSLGELLFSDPAFARGTLEVCHYPEAWLPDAVAARGLWARRSRFSRGALSVLVAEVFLPALCNTIHDKDPV.

Residues arginine 80, leucine 118, and glutamate 170 each contribute to the substrate site.

The protein belongs to the UbiC family.

It is found in the cytoplasm. The enzyme catalyses chorismate = 4-hydroxybenzoate + pyruvate. It functions in the pathway cofactor biosynthesis; ubiquinone biosynthesis. Its function is as follows. Removes the pyruvyl group from chorismate, with concomitant aromatization of the ring, to provide 4-hydroxybenzoate (4HB) for the ubiquinone pathway. This chain is Probable chorismate pyruvate-lyase, found in Pseudomonas savastanoi pv. phaseolicola (strain 1448A / Race 6) (Pseudomonas syringae pv. phaseolicola (strain 1448A / Race 6)).